The primary structure comprises 347 residues: Biotin synthase (347 aa).

One can recognise a Radical SAM core domain in the interval 40–258 (AQVQVSTLLS…IAVARIAMPR (219 aa)). [4Fe-4S] cluster-binding residues include C55, C59, and C62. Positions 99, 130, 190, and 262 each coordinate [2Fe-2S] cluster.

The protein belongs to the radical SAM superfamily. Biotin synthase family. Homodimer. The cofactor is [4Fe-4S] cluster. [2Fe-2S] cluster serves as cofactor.

The catalysed reaction is (4R,5S)-dethiobiotin + (sulfur carrier)-SH + 2 reduced [2Fe-2S]-[ferredoxin] + 2 S-adenosyl-L-methionine = (sulfur carrier)-H + biotin + 2 5'-deoxyadenosine + 2 L-methionine + 2 oxidized [2Fe-2S]-[ferredoxin]. It participates in cofactor biosynthesis; biotin biosynthesis; biotin from 7,8-diaminononanoate: step 2/2. Catalyzes the conversion of dethiobiotin (DTB) to biotin by the insertion of a sulfur atom into dethiobiotin via a radical-based mechanism. This is Biotin synthase from Stenotrophomonas maltophilia (strain K279a).